We begin with the raw amino-acid sequence, 254 residues long: Ribosomal protein L11 methyltransferase (254 aa).

S-adenosyl-L-methionine-binding residues include Thr-107, Gly-128, Asp-149, Ser-175, and Asn-191.

This sequence belongs to the methyltransferase superfamily. PrmA family.

Its subcellular location is the cytoplasm. The enzyme catalyses L-lysyl-[protein] + 3 S-adenosyl-L-methionine = N(6),N(6),N(6)-trimethyl-L-lysyl-[protein] + 3 S-adenosyl-L-homocysteine + 3 H(+). The catalysed reaction is an N-terminal L-alpha-aminoacyl-[protein] + 3 S-adenosyl-L-methionine = an N-terminal trimethyl-L-alpha-aminoacyl-[protein] + 3 S-adenosyl-L-homocysteine + 3 H(+). Functionally, methylates ribosomal protein L11. Preferentially recognizes free L11 before its incorporation into 50S subunits. This function is dispensable for growth and thermostability. The chain is Ribosomal protein L11 methyltransferase from Thermus thermophilus (strain ATCC 27634 / DSM 579 / HB8).